A 528-amino-acid chain; its full sequence is PH domain-containing protein DDB_G0267786 (528 aa).

The PH domain maps to 59 to 180 (SDVFSGYLVK…WIEIFKTCCR (122 aa)).

The polypeptide is PH domain-containing protein DDB_G0267786 (Dictyostelium discoideum (Social amoeba)).